A 207-amino-acid polypeptide reads, in one-letter code: Small ribosomal subunit protein uS4c (207 aa).

One can recognise an S4 RNA-binding domain in the interval 92–153; sequence MRLDNILFRL…PKTYQSILSK (62 aa).

It belongs to the universal ribosomal protein uS4 family. As to quaternary structure, part of the 30S ribosomal subunit. Contacts protein S5. The interaction surface between S4 and S5 is involved in control of translational fidelity.

The protein resides in the plastid. Its subcellular location is the chloroplast. One of the primary rRNA binding proteins, it binds directly to 16S rRNA where it nucleates assembly of the body of the 30S subunit. In terms of biological role, with S5 and S12 plays an important role in translational accuracy. This Equisetum hyemale (Dutch rush) protein is Small ribosomal subunit protein uS4c (rps4).